The primary structure comprises 260 residues: Small ribosomal subunit protein eS4 (260 aa).

In terms of domain architecture, S4 RNA-binding spans 46-111 (VPLLILVRDM…RYRVVMNEHH (66 aa)).

Belongs to the eukaryotic ribosomal protein eS4 family.

In Methanopyrus kandleri (strain AV19 / DSM 6324 / JCM 9639 / NBRC 100938), this protein is Small ribosomal subunit protein eS4.